The sequence spans 362 residues: MEKTEWSDLPEELLDLIANRYSSNIDVLRIRSTCKSWRSAVAMSKERLQFRFERYLPTSNKKIKAHLSPTTFFRITLPSSCPNKGWLVRTRQASKMYRKITLLCPLSGERITRSHQTLDLLKVGVSEIRQSYEIQIFDGLKDEKIPLDSEIFSNYIKNSDKIPSVNYHDNKIWCCKTREGSRSWTKIKNQVEDFSDIILHMGRIYAVDLKGAIWWISLSQLTIVQQTSSTPLDYYKYDSCQDTRLVEYCGDLCIVHELSITRNHIQRTVGFKVYKMDEDLAKWVEVSCLGDNTLIVACNSCFTVVASEYHGCLKNSIYFSYYDVKKAENIKVFKLDDGSITQRTDISSQSCFHMFSLPFLNY.

The region spanning 4-52 (TEWSDLPEELLDLIANRYSSNIDVLRIRSTCKSWRSAVAMSKERLQFRF) is the F-box domain.

In Arabidopsis thaliana (Mouse-ear cress), this protein is Putative F-box protein At3g25750.